The primary structure comprises 369 residues: Tryptophan 2,3-dioxygenase 2 (369 aa).

Residues 36 to 40 (FIVVH) and Arg-107 contribute to the substrate site. His-303 is a binding site for heme. A substrate-binding site is contributed by Thr-317.

This sequence belongs to the tryptophan 2,3-dioxygenase family. In terms of assembly, homotetramer. Heme serves as cofactor.

The enzyme catalyses L-tryptophan + O2 = N-formyl-L-kynurenine. It functions in the pathway amino-acid degradation; L-tryptophan degradation via kynurenine pathway; L-kynurenine from L-tryptophan: step 1/2. Functionally, heme-dependent dioxygenase that catalyzes the oxidative cleavage of the L-tryptophan (L-Trp) pyrrole ring and converts L-tryptophan to N-formyl-L-kynurenine. Catalyzes the oxidative cleavage of the indole moiety. This is Tryptophan 2,3-dioxygenase 2 from Ralstonia nicotianae (strain ATCC BAA-1114 / GMI1000) (Ralstonia solanacearum).